A 74-amino-acid chain; its full sequence is ERTHTGEKPFECPECHKRFTRDHHLKTHMRLHTGEKPYHCSHCDRQFVQVANLRRHLRVHTGERPYACELCAAK.

C2H2-type zinc fingers lie at residues 1–4 (ERTH), 10–32 (FECP…MRLH), 38–60 (YHCS…LRVH), and 66–74 (YACELCAAK).

This sequence belongs to the krueppel C2H2-type zinc-finger protein family.

The protein localises to the nucleus. Functionally, krueppel is a gap class segmentation protein. This is Protein krueppel (Kr) from Apis mellifera (Honeybee).